The following is a 300-amino-acid chain: NAD kinase (300 aa).

Asp75 functions as the Proton acceptor in the catalytic mechanism. NAD(+)-binding positions include 75–76 (DG), 149–150 (ND), Arg177, Asp179, 190–195 (TAYALS), Ala214, and Gln248.

The protein belongs to the NAD kinase family. It depends on a divalent metal cation as a cofactor.

The protein resides in the cytoplasm. The catalysed reaction is NAD(+) + ATP = ADP + NADP(+) + H(+). Involved in the regulation of the intracellular balance of NAD and NADP, and is a key enzyme in the biosynthesis of NADP. Catalyzes specifically the phosphorylation on 2'-hydroxyl of the adenosine moiety of NAD to yield NADP. The polypeptide is NAD kinase (Burkholderia lata (strain ATCC 17760 / DSM 23089 / LMG 22485 / NCIMB 9086 / R18194 / 383)).